A 207-amino-acid polypeptide reads, in one-letter code: Proteasome subunit beta 2 (207 aa).

The propeptide at 1–10 (MLQLTEKFKG) is removed in mature form; by autocatalysis. Threonine 11 (nucleophile) is an active-site residue.

Belongs to the peptidase T1B family. The 20S proteasome core is composed of 14 alpha and 14 beta subunits that assemble into four stacked heptameric rings, resulting in a barrel-shaped structure. The two inner rings, each composed of seven catalytic beta subunits, are sandwiched by two outer rings, each composed of seven alpha subunits. The catalytic chamber with the active sites is on the inside of the barrel. Has a gated structure, the ends of the cylinder being occluded by the N-termini of the alpha-subunits. Is capped at one or both ends by the proteasome regulatory ATPase, PAN.

The protein localises to the cytoplasm. The catalysed reaction is Cleavage of peptide bonds with very broad specificity.. Its activity is regulated as follows. The formation of the proteasomal ATPase PAN-20S proteasome complex, via the docking of the C-termini of PAN into the intersubunit pockets in the alpha-rings, triggers opening of the gate for substrate entry. Interconversion between the open-gate and close-gate conformations leads to a dynamic regulation of the 20S proteasome proteolysis activity. In terms of biological role, component of the proteasome core, a large protease complex with broad specificity involved in protein degradation. The polypeptide is Proteasome subunit beta 2 (Pyrococcus abyssi (strain GE5 / Orsay)).